A 176-amino-acid polypeptide reads, in one-letter code: Warthog protein 5 (176 aa).

A signal peptide spans 1-21 (MCSMWLMASWLMAFVAGSTLA). Asparagine 70 carries N-linked (GlcNAc...) asparagine glycosylation.

As to expression, expressed in seam cells, excretory cell, reproductive system, pharynx, pharyngeal-intestinal valve cells, neurons and neuronal support cells.

The protein resides in the secreted. In terms of biological role, intercellular signal essential for a variety of patterning events during development. The sequence is that of Warthog protein 5 (wrt-5) from Caenorhabditis elegans.